Consider the following 336-residue polypeptide: Protein-lysine N-methyltransferase EFM3 (336 aa).

Residues tryptophan 147, 173–175 (GTG), aspartate 196, leucine 232, and alanine 251 contribute to the S-adenosyl-L-methionine site.

The protein belongs to the class I-like SAM-binding methyltransferase superfamily. EEF2KMT family.

The protein localises to the cytoplasm. Functionally, S-adenosyl-L-methionine-dependent protein-lysine N-methyltransferase that methylates elongation factor 2. The protein is Protein-lysine N-methyltransferase EFM3 of Chaetomium thermophilum (strain DSM 1495 / CBS 144.50 / IMI 039719) (Thermochaetoides thermophila).